Consider the following 198-residue polypeptide: Holliday junction resolvase RecU (198 aa).

The tract at residues 1-22 (MVNYPHKVSSQKRQTSLSQPKN) is disordered. The span at 11-22 (QKRQTSLSQPKN) shows a compositional bias: polar residues. Residues T81, D83, E96, and Q115 each contribute to the Mg(2+) site.

This sequence belongs to the RecU family. Requires Mg(2+) as cofactor.

It localises to the cytoplasm. It carries out the reaction Endonucleolytic cleavage at a junction such as a reciprocal single-stranded crossover between two homologous DNA duplexes (Holliday junction).. Endonuclease that resolves Holliday junction intermediates in genetic recombination. Cleaves mobile four-strand junctions by introducing symmetrical nicks in paired strands. Promotes annealing of linear ssDNA with homologous dsDNA. Required for DNA repair, homologous recombination and chromosome segregation. The protein is Holliday junction resolvase RecU of Streptococcus pneumoniae serotype 2 (strain D39 / NCTC 7466).